Reading from the N-terminus, the 368-residue chain is P2X receptor C (368 aa).

Residues 1-24 (MLDWDSILAYNTIKVVRIRDRRLG) lie on the Cytoplasmic side of the membrane. A helical transmembrane segment spans residues 25–45 (ILHLIFMIAIISYVVIYSAII). The Lumenal segment spans residues 46–368 (KKGYLSIEEP…DKLYHNIEAL (323 aa)). A pore-forming motif region spans residues 282–295 (RHAIRLIFIQTGVI).

It belongs to the P2X receptor family.

It localises to the contractile vacuole membrane. Its function is as follows. P2X receptors are ligand-gated ion channels that play a role in intracellular calcium signaling. ATP does not evoke inward currents in p2xC. Not essential for osmoregulation. The polypeptide is P2X receptor C (p2xC) (Dictyostelium discoideum (Social amoeba)).